The primary structure comprises 359 residues: 4-galactosyl-N-acetylglucosaminide 3-alpha-L-fucosyltransferase 9 (359 aa).

Over 1–11 the chain is Cytoplasmic; sequence MTSTSKGILRP. The chain crosses the membrane as a helical; Signal-anchor for type II membrane protein span at residues 12 to 32; sequence FLIVCIILGCFMACLLIYIKP. Topologically, residues 33–359 are lumenal; it reads TNSWVFSPME…VGNLEKWFWN (327 aa). N-linked (GlcNAc...) asparagine glycosylation is present at asparagine 62. Residues 63 to 168 are acceptor-binding; it reads ETTILVWVWP…RRDSDIQVPY (106 aa). Glutamine 75 provides a ligand contact to a beta-D-galactosyl-(1-&gt;4)-N-acetyl-beta-D-glucosaminyl derivative. 3 disulfides stabilise this stretch: cysteine 82–cysteine 335, cysteine 91–cysteine 338, and cysteine 190–cysteine 238. N-linked (GlcNAc...) asparagine glycosylation is present at asparagine 101. Glutamate 137 serves as a coordination point for a beta-D-galactosyl-(1-&gt;4)-N-acetyl-beta-D-glucosaminyl derivative. Residue glutamate 137 is the Nucleophile of the active site. Glutamate 137 contributes to the GDP-beta-L-fucose binding site. The N-linked (GlcNAc...) asparagine glycan is linked to asparagine 153. GDP-beta-L-fucose is bound by residues tyrosine 168, valine 192, serine 194, asparagine 195, arginine 202, valine 226, tyrosine 241, asparagine 246, tyrosine 252, glutamate 255, and lysine 256. The donor-binding stretch occupies residues 169 to 326; that stretch reads GFLTVSTNPF…NWRKDFTVNL (158 aa). The tract at residues 327–359 is acceptor-binding; the sequence is PRFWESHACLACDHVKRHQEYKSVGNLEKWFWN.

It belongs to the glycosyltransferase 10 family. In terms of assembly, homodimer. In terms of processing, N-glycosylated with complex-type N-glycans. As to expression, mainly detected in brain and kidney.

It localises to the golgi apparatus. It is found in the trans-Golgi network membrane. Its subcellular location is the golgi apparatus membrane. It carries out the reaction a beta-D-galactosyl-(1-&gt;4)-N-acetyl-beta-D-glucosaminyl derivative + GDP-beta-L-fucose = a beta-D-galactosyl-(1-&gt;4)-[alpha-L-fucosyl-(1-&gt;3)]-N-acetyl-beta-D-glucosaminyl derivative + GDP + H(+). The enzyme catalyses an alpha-Neu5Ac-(2-&gt;3)-beta-D-Gal-(1-&gt;4)-beta-D-GlcNAc-(1-&gt;3)-beta-D-Gal-(1-&gt;4)-beta-D-GlcNAc derivative + GDP-beta-L-fucose = an alpha-Neu5Ac-(2-&gt;3)-beta-D-Gal-(1-&gt;4)-beta-D-GlcNAc-(1-&gt;3)-beta-D-Gal-(1-&gt;4)-[alpha-L-Fuc-(1-&gt;3)]-beta-D-GlcNAc derivative + GDP + H(+). The catalysed reaction is alpha-N-glycoloylneuraminosyl-(2-&gt;3)-beta-D-galactosyl-(1-&gt;4)-N-acetyl-beta-D-glucosaminyl-(1-&gt;3)-beta-D-galactosyl-(1-&gt;4)-N-acetyl-beta-D-glucosaminyl-(1-&gt;3)-beta-D-galactosyl-(1-&gt;4)-beta-D-glucosyl-(1&lt;-&gt;1')-ceramide + GDP-beta-L-fucose = alpha-N-glycoloylneuraminosyl-(2-&gt;3)-beta-D-galactosyl-(1-&gt;4)-N-acetyl-beta-D-glucosaminyl-(1-&gt;3)-beta-D-galactosyl-(1-&gt;4)-[alpha-L-fucosyl-(1-&gt;3)]-N-acetyl-beta-D-glucosaminyl-(1-&gt;3)-beta-D-galactosyl-(1-&gt;4)-beta-D-glucosyl-(1&lt;-&gt;1')-ceramide + GDP + H(+). It catalyses the reaction alpha-D-galactosyl-(1-&gt;3)-beta-D-galactosyl-(1-&gt;4)-N-acetyl-beta-D-glucosaminyl-(1-&gt;3)-beta-D-galactosyl-(1-&gt;4)-beta-D-glucosyl-(1&lt;-&gt;1')-ceramide + GDP-beta-L-fucose = a neolactoside IV(3)-alpha-Gal,III(3)-alpha-Fuc-nLc4Cer + GDP + H(+). It carries out the reaction a neolactoside nLc4Cer + GDP-beta-L-fucose = a neolactoside III(3)-alpha-Fuc-nLc4Cer + GDP + H(+). The enzyme catalyses an N-acetyl-alpha-neuraminyl-(2-&gt;3)-beta-D-galactosyl-(1-&gt;4)-N-acetyl-beta-D-glucosaminyl derivative + GDP-beta-L-fucose = an alpha-Neu5Ac-(2-&gt;3)-beta-D-Gal-(1-&gt;4)-[alpha-L-Fuc-(1-&gt;3)]-beta-D-GlcNAc derivative + GDP + H(+). The catalysed reaction is beta-D-Gal-(1-&gt;4)-beta-D-GlcNAc-(1-&gt;3)-beta-D-Gal-(1-&gt;4)-D-Glc + GDP-beta-L-fucose = beta-D-Gal-(1-&gt;4)-[alpha-L-Fuc-(1-&gt;3)]-beta-D-GlcNAc-(1-&gt;3)-beta-D-Gal-(1-&gt;4)-D-Glc + GDP + H(+). It catalyses the reaction an alpha-L-Fuc-(1-&gt;2)-beta-D-Gal-(1-&gt;4)-beta-D-GlcNAc derivative + GDP-beta-L-fucose = an alpha-L-Fuc-(1-&gt;2)-beta-D-Gal-(1-&gt;4)-[alpha-L-Fuc-(1-&gt;3)]-beta-D-GlcNAc derivative + GDP + H(+). It functions in the pathway protein modification; protein glycosylation. The protein operates within glycolipid biosynthesis. Its activity is regulated as follows. Activated by Mn2+. Its function is as follows. Catalyzes alpha(1-&gt;3) linkage of fucosyl moiety transferred from GDP-beta-L-fucose to N-acetyl glucosamine (GlcNAc) within type 2 lactosamine (LacNAc, beta-D-Gal-(1-&gt;4)-beta-D-GlcNAc-) glycan attached to glycolipids and N- or O-linked glycoproteins. Fucosylates distal type 2 LacNAc and its fucosylated (H-type 2 LacNAc) and sialylated (sialyl-type 2 LacNAc) derivatives to form Lewis x (Lex) (CD15) and Lewis y (Ley) antigenic epitopes involved in cell adhesion and differentiation. Generates Lex epitopes in the brain, presumably playing a role in the maintenance of neuronal stemness and neurite outgrowth in progenitor neural cells. Fucosylates the internal type 2 LacNAc unit of the polylactosamine chain to form VIM-2 antigen that serves as recognition epitope for SELE. Can also modify milk oligosaccharides in particular type 2 tetrasaccharide LNnT. The protein is 4-galactosyl-N-acetylglucosaminide 3-alpha-L-fucosyltransferase 9 of Mus musculus (Mouse).